Here is a 446-residue protein sequence, read N- to C-terminus: D(1A) dopamine receptor (446 aa).

Residues 1–23 (MRTLNTSAMDGTGLVVERDFSVR) lie on the Extracellular side of the membrane. A glycan (N-linked (GlcNAc...) asparagine) is linked at N5. The chain crosses the membrane as a helical span at residues 24–49 (ILTACFLSLLILSTLLGNTLVCAAVI). The Cytoplasmic portion of the chain corresponds to 50–60 (RFRHLRSKVTN). A helical transmembrane segment spans residues 61–87 (FFVISLAVSDLLVAVLVMPWKAVAEIA). The Extracellular portion of the chain corresponds to 88–96 (GFWPFGSFC). Residues C96 and C186 are joined by a disulfide bond. Residues 97–119 (NIWVAFDIMCSTASILNLCVISV) traverse the membrane as a helical segment. Residues 120–138 (DRYWAISSPFRYERKMTPK) are Cytoplasmic-facing. A helical transmembrane segment spans residues 139–163 (AAFILISVAWTLSVLISFIPVQLSW). Residues 164–192 (HKAKPTSPSDGNATSLAETIDNCDSSLSR) are Extracellular-facing. An N-linked (GlcNAc...) asparagine glycan is attached at N175. A helical transmembrane segment spans residues 193–218 (TYAISSSVISFYIPVAIMIVTYTRIY). Residues 219–272 (RIAQKQIRRIAALERAAVHAKNCQTTTGNGKPVECSQPESSFKMSFKRETKVLK) lie on the Cytoplasmic side of the membrane. A helical transmembrane segment spans residues 273–299 (TLSVIMGVFVCCWLPFFILNCILPFCG). The Extracellular portion of the chain corresponds to 300–312 (SGETQPFCIDSIT). A helical membrane pass occupies residues 313–337 (FDVFVWFGWANSSLNPIIYAFNADF). Topologically, residues 338 to 446 (RKAFSTLLGC…PITQNGQHPT (109 aa)) are cytoplasmic. 2 S-palmitoyl cysteine lipidation sites follow: C347 and C351.

It belongs to the G-protein coupled receptor 1 family. Interacts with DNAJC14 via its C-terminus. Interacts with DRD2. Interacts with DORIP1.

Its subcellular location is the cell membrane. It is found in the endoplasmic reticulum membrane. The protein localises to the cell projection. The protein resides in the cilium membrane. It localises to the dendrite. Its subcellular location is the dendritic spine. In terms of biological role, dopamine receptor whose activity is mediated by G proteins which activate adenylyl cyclase. The protein is D(1A) dopamine receptor (DRD1) of Macaca mulatta (Rhesus macaque).